The chain runs to 115 residues: MASQTALSARSAYRQLLRATRIAFQDDVRVMIAARQEARRNFDSHRREGIDTPMQINHALEVANILRHNIVQGVREQDDENAKWELRIHDDIERGDNDTIRVKGKTVKVDKACSS.

A mitochondrion-targeting transit peptide spans 1–36; that stretch reads MASQTALSARSAYRQLLRATRIAFQDDVRVMIAARQ.

Belongs to the complex I LYR family. MZM1 subfamily. In terms of assembly, interacts with RIP1.

It localises to the mitochondrion matrix. Functionally, assembly factor required for Rieske Fe-S protein RIP1 incorporation into the cytochrome b-c1 (CIII) complex. Functions as a chaperone, binding to this subunit within the mitochondrial matrix and stabilizing it prior to its translocation and insertion into the late CIII dimeric intermediate within the mitochondrial inner membrane. Modulates the mitochondrial matrix zinc pool. This Aspergillus niger (strain ATCC MYA-4892 / CBS 513.88 / FGSC A1513) protein is Mitochondrial zinc maintenance protein 1, mitochondrial (MZM1).